Here is a 284-residue protein sequence, read N- to C-terminus: Putative cysteine-rich repeat secretory protein 7 (284 aa).

Residues Met-1–Ser-24 form the signal peptide. 2 Gnk2-homologous domains span residues Pro-26–Phe-128 and Ser-134–Leu-244. Residues Pro-247–Thr-284 are disordered.

The protein belongs to the cysteine-rich repeat secretory protein family.

It localises to the secreted. The polypeptide is Putative cysteine-rich repeat secretory protein 7 (CRRSP7) (Arabidopsis thaliana (Mouse-ear cress)).